We begin with the raw amino-acid sequence, 247 residues long: Probable transcriptional regulatory protein plu2109 (247 aa).

This sequence belongs to the TACO1 family.

It is found in the cytoplasm. This Photorhabdus laumondii subsp. laumondii (strain DSM 15139 / CIP 105565 / TT01) (Photorhabdus luminescens subsp. laumondii) protein is Probable transcriptional regulatory protein plu2109.